Consider the following 371-residue polypeptide: Dual-specificity RNA methyltransferase RlmN (371 aa).

The Proton acceptor role is filled by Glu-92. One can recognise a Radical SAM core domain in the interval 98-337 (EADRATLCVS…VTVRKTRGDD (240 aa)). Cys-105 and Cys-342 are joined by a disulfide. The [4Fe-4S] cluster site is built by Cys-112, Cys-116, and Cys-119. S-adenosyl-L-methionine is bound by residues 166-167 (GE), Ser-198, 220-222 (SLH), and Asn-299. Catalysis depends on Cys-342, which acts as the S-methylcysteine intermediate.

It belongs to the radical SAM superfamily. RlmN family. [4Fe-4S] cluster is required as a cofactor.

It is found in the cytoplasm. The catalysed reaction is adenosine(2503) in 23S rRNA + 2 reduced [2Fe-2S]-[ferredoxin] + 2 S-adenosyl-L-methionine = 2-methyladenosine(2503) in 23S rRNA + 5'-deoxyadenosine + L-methionine + 2 oxidized [2Fe-2S]-[ferredoxin] + S-adenosyl-L-homocysteine. It carries out the reaction adenosine(37) in tRNA + 2 reduced [2Fe-2S]-[ferredoxin] + 2 S-adenosyl-L-methionine = 2-methyladenosine(37) in tRNA + 5'-deoxyadenosine + L-methionine + 2 oxidized [2Fe-2S]-[ferredoxin] + S-adenosyl-L-homocysteine. In terms of biological role, specifically methylates position 2 of adenine 2503 in 23S rRNA and position 2 of adenine 37 in tRNAs. m2A2503 modification seems to play a crucial role in the proofreading step occurring at the peptidyl transferase center and thus would serve to optimize ribosomal fidelity. The polypeptide is Dual-specificity RNA methyltransferase RlmN (Actinobacillus succinogenes (strain ATCC 55618 / DSM 22257 / CCUG 43843 / 130Z)).